A 141-amino-acid polypeptide reads, in one-letter code: Nucleoside diphosphate kinase (141 aa).

The ATP site is built by lysine 11, phenylalanine 59, arginine 87, threonine 93, arginine 104, and asparagine 114. Histidine 117 acts as the Pros-phosphohistidine intermediate in catalysis.

The protein belongs to the NDK family. In terms of assembly, homotetramer. The cofactor is Mg(2+).

It localises to the cytoplasm. It carries out the reaction a 2'-deoxyribonucleoside 5'-diphosphate + ATP = a 2'-deoxyribonucleoside 5'-triphosphate + ADP. The catalysed reaction is a ribonucleoside 5'-diphosphate + ATP = a ribonucleoside 5'-triphosphate + ADP. Major role in the synthesis of nucleoside triphosphates other than ATP. The ATP gamma phosphate is transferred to the NDP beta phosphate via a ping-pong mechanism, using a phosphorylated active-site intermediate. The polypeptide is Nucleoside diphosphate kinase (Alkalilimnicola ehrlichii (strain ATCC BAA-1101 / DSM 17681 / MLHE-1)).